We begin with the raw amino-acid sequence, 360 residues long: Photosystem II protein D1 (360 aa).

Helical transmembrane passes span 30–47 (YVGW…AAAA), 119–134 (HFLI…QWEL), and 143–157 (WICV…AAFA). His119 contacts chlorophyll a. Tyr127 is a pheophytin a binding site. Residues Asp171 and Glu190 each contribute to the [CaMn4O5] cluster site. The helical transmembrane segment at 198–219 (FHMAGVAGMFGGSLFSAMHGSL) threads the bilayer. Residue His199 coordinates chlorophyll a. Residues His216 and 265–266 (SF) contribute to the a quinone site. A Fe cation-binding site is contributed by His216. His273 lines the Fe cation pocket. A helical membrane pass occupies residues 275 to 289 (FLAVFPVVCVWLTSM). [CaMn4O5] cluster is bound by residues His333, Glu334, Asp343, and Ala345. Positions 346–360 (AAESTTVALSAPAIG) are excised as a propeptide.

It belongs to the reaction center PufL/M/PsbA/D family. In terms of assembly, PSII is composed of 1 copy each of membrane proteins PsbA, PsbB, PsbC, PsbD, PsbE, PsbF, PsbH, PsbI, PsbJ, PsbK, PsbL, PsbM, PsbT, PsbX, PsbY, Psb30/Ycf12, peripheral proteins PsbO, CyanoQ (PsbQ), PsbU, PsbV and a large number of cofactors. It forms dimeric complexes. It depends on The D1/D2 heterodimer binds P680, chlorophylls that are the primary electron donor of PSII, and subsequent electron acceptors. It shares a non-heme iron and each subunit binds pheophytin, quinone, additional chlorophylls, carotenoids and lipids. D1 provides most of the ligands for the Mn4-Ca-O5 cluster of the oxygen-evolving complex (OEC). There is also a Cl(-1) ion associated with D1 and D2, which is required for oxygen evolution. The PSII complex binds additional chlorophylls, carotenoids and specific lipids. as a cofactor. Tyr-162 forms a radical intermediate that is referred to as redox-active TyrZ, YZ or Y-Z. Post-translationally, C-terminally processed by CtpA; processing is essential to allow assembly of the oxygen-evolving complex and thus photosynthetic growth.

The protein resides in the cellular thylakoid membrane. The catalysed reaction is 2 a plastoquinone + 4 hnu + 2 H2O = 2 a plastoquinol + O2. Functionally, photosystem II (PSII) is a light-driven water:plastoquinone oxidoreductase that uses light energy to abstract electrons from H(2)O, generating O(2) and a proton gradient subsequently used for ATP formation. It consists of a core antenna complex that captures photons, and an electron transfer chain that converts photonic excitation into a charge separation. The D1/D2 (PsbA/PsbD) reaction center heterodimer binds P680, the primary electron donor of PSII as well as several subsequent electron acceptors. This chain is Photosystem II protein D1, found in Prochlorococcus marinus (strain MIT 9312).